A 155-amino-acid chain; its full sequence is Large ribosomal subunit protein eL24 (155 aa).

A disordered region spans residues 87–155 (LELIKERRSQ…SFQKVKATSR (69 aa)). Positions 89–129 (LIKERRSQKPSDRKAARDSKLAKDKEAKKAAKAARKAEKAK) are enriched in basic and acidic residues. The segment covering 130-143 (AVASGASVVSKQQA) has biased composition (low complexity).

It belongs to the eukaryotic ribosomal protein eL24 family. In terms of assembly, component of the large ribosomal subunit. Mature ribosomes consist of a small (40S) and a large (60S) subunit. The 40S subunit contains about 32 different proteins and 1 molecule of RNA (18S). The 60S subunit contains 45 different proteins and 3 molecules of RNA (25S, 5.8S and 5S).

The protein localises to the cytoplasm. Its function is as follows. Component of the ribosome, a large ribonucleoprotein complex responsible for the synthesis of proteins in the cell. The small ribosomal subunit (SSU) binds messenger RNAs (mRNAs) and translates the encoded message by selecting cognate aminoacyl-transfer RNA (tRNA) molecules. The large subunit (LSU) contains the ribosomal catalytic site termed the peptidyl transferase center (PTC), which catalyzes the formation of peptide bonds, thereby polymerizing the amino acids delivered by tRNAs into a polypeptide chain. The nascent polypeptides leave the ribosome through a tunnel in the LSU and interact with protein factors that function in enzymatic processing, targeting, and the membrane insertion of nascent chains at the exit of the ribosomal tunnel. The sequence is that of Large ribosomal subunit protein eL24 from Candida albicans (strain SC5314 / ATCC MYA-2876) (Yeast).